The chain runs to 375 residues: tRNA-specific 2-thiouridylase MnmA (375 aa).

Residues 7 to 14 (GLSGGVDS) and methionine 33 contribute to the ATP site. The interval 102-104 (NPD) is interaction with target base in tRNA. Residue cysteine 107 is the Nucleophile of the active site. The cysteines at positions 107 and 205 are disulfide-linked. Glycine 132 contributes to the ATP binding site. Residues 155–157 (KDQ) are interaction with tRNA. The active-site Cysteine persulfide intermediate is cysteine 205. Residues 313–314 (RY) form an interaction with tRNA region.

This sequence belongs to the MnmA/TRMU family.

The protein resides in the cytoplasm. It carries out the reaction S-sulfanyl-L-cysteinyl-[protein] + uridine(34) in tRNA + AH2 + ATP = 2-thiouridine(34) in tRNA + L-cysteinyl-[protein] + A + AMP + diphosphate + H(+). In terms of biological role, catalyzes the 2-thiolation of uridine at the wobble position (U34) of tRNA, leading to the formation of s(2)U34. This chain is tRNA-specific 2-thiouridylase MnmA, found in Phytoplasma australiense.